A 681-amino-acid chain; its full sequence is Envelope glycoprotein (681 aa).

The N-terminal stretch at 1 to 18 (MKTTCFLISLILIQGTKN) is a signal peptide. Residues 19 to 648 (LPILEIASNN…GLGGKWWTSD (630 aa)) lie on the Extracellular side of the membrane. Disulfide bonds link Cys-37/Cys-610, Cys-92/Cys-119, Cys-211/Cys-226, Cys-512/Cys-557, and Cys-602/Cys-609. Residues 38 to 188 (SGTLQKTEDV…FSRQGQGYRH (151 aa)) are receptor-binding. 8 N-linked (GlcNAc...) asparagine; by host glycosylation sites follow: Asn-94, Asn-171, Asn-190, Asn-202, Asn-207, Asn-219, Asn-223, and Asn-255. The interval 223-427 (NQTCAPSKIP…PPTPSSTAQH (205 aa)) is disordered. 3 stretches are compositionally biased toward polar residues: residues 244–259 (LTSTPTDATKLNTTDP), 281–290 (TSDAVTKQGL), and 308–318 (GGNNTNHSQDA). The mucin-like region stretch occupies residues 277–455 (EPHTTSDAVT…PFLDGLINAP (179 aa)). N-linked (GlcNAc...) asparagine; by host glycosylation is found at Asn-310, Asn-313, Asn-325, Asn-326, Asn-337, Asn-344, Asn-345, Asn-350, Asn-360, Asn-408, and Asn-487. Residues 337 to 347 (NTTTISTNNTS) show a composition bias toward low complexity. A compositionally biased stretch (polar residues) spans 348–414 (KHNFSTLSAP…TAPNTTNEHF (67 aa)). Residues 529–549 (GLSWIPFFGPGIEGLYTAVLI) are fusion peptide. N-linked (GlcNAc...) asparagine; by host glycosylation is present at Asn-564. N-linked (GlcNAc...) asparagine; by host glycosylation occurs at Asn-619. Residues 649 to 669 (WGVLTNLGILLLLSIAVLIAL) form a helical membrane-spanning segment. Residues 670–681 (SCICRIFTKYIG) lie on the Cytoplasmic side of the membrane. S-palmitoyl cysteine; by host attachment occurs at residues Cys-671 and Cys-673.

This sequence belongs to the filoviruses glycoprotein family. Homotrimer; each monomer consists of a GP1 and a GP2 subunit linked by disulfide bonds. The resulting peplomers (GP1,2) protrude from the virus surface as spikes. GP1,2 interacts with human CD209 and CLEC4M (collectively referred to as DC-SIGN(R)). Asialoglycoprotein receptor (ASGP-R) may be a liver-specific receptor for GP1,2. Members of the Tyro3 receptor tyrosine kinase family may be cell entry factors interacting with GP1,2. N-glycosylated. In terms of processing, O-glycosylated in the mucin-like region. Post-translationally, specific enzymatic cleavages in vivo yield mature proteins. The precursor is processed into GP1 and GP2 by host cell furin in the trans Golgi, and maybe by other host proteases, to yield the mature GP1 and GP2 proteins. The cleavage site corresponds to the furin optimal cleavage sequence [KR]-X-[KR]-R. GP1 is phosphorylated on serine residues between residues 260 and 273.

It localises to the virion membrane. Its subcellular location is the host cell membrane. Its function is as follows. GP1 is responsible for binding to the receptor(s) on target cells. Interacts with CD209/DC-SIGN and CLEC4M/DC-SIGNR which act as cofactors for virus entry into the host cell. Binding to CD209 and CLEC4M, which are respectively found on dendritic cells (DCs), and on endothelial cells of liver sinusoids and lymph node sinuses, facilitate infection of macrophages and endothelial cells. These interactions not only facilitate virus cell entry, but also allow capture of viral particles by DCs and subsequent transmission to susceptible cells without DCs infection (trans infection). In terms of biological role, GP2 acts as a class I viral fusion protein. Under the current model, the protein has at least 3 conformational states: pre-fusion native state, pre-hairpin intermediate state, and post-fusion hairpin state. During viral and target cell membrane fusion, the coiled coil regions (heptad repeats) assume a trimer-of-hairpins structure, positioning the fusion peptide in close proximity to the C-terminal region of the ectodomain. The formation of this structure appears to drive apposition and subsequent fusion of viral and target cell membranes. Responsible for penetration of the virus into the cell cytoplasm by mediating the fusion of the membrane of the endocytosed virus particle with the endosomal membrane. Low pH in endosomes induces an irreversible conformational change in GP2, releasing the fusion hydrophobic peptide. In Lake Victoria marburgvirus (strain Musoke-80) (MARV), this protein is Envelope glycoprotein (GP).